The following is a 300-amino-acid chain: Dihydroorotate dehydrogenase B (NAD(+)), catalytic subunit (300 aa).

Residues Ser-20 and 44–45 (KG) contribute to the FMN site. Substrate is bound by residues Lys-44 and 68 to 72 (NAIGL). Residues Asn-98 and Asn-125 each contribute to the FMN site. Asn-125 provides a ligand contact to substrate. The Nucleophile role is filled by Cys-128. FMN contacts are provided by Lys-163 and Ile-189. Position 190 to 191 (190 to 191 (NT)) interacts with substrate. Residues Gly-215, 241–242 (GG), and 263–264 (GT) each bind FMN.

This sequence belongs to the dihydroorotate dehydrogenase family. Type 1 subfamily. Heterotetramer of 2 PyrK and 2 PyrD type B subunits. The cofactor is FMN.

It localises to the cytoplasm. The catalysed reaction is (S)-dihydroorotate + NAD(+) = orotate + NADH + H(+). It participates in pyrimidine metabolism; UMP biosynthesis via de novo pathway; orotate from (S)-dihydroorotate (NAD(+) route): step 1/1. Its function is as follows. Catalyzes the conversion of dihydroorotate to orotate with NAD(+) as electron acceptor. This is Dihydroorotate dehydrogenase B (NAD(+)), catalytic subunit (pyrD) from Lachnoclostridium phytofermentans (strain ATCC 700394 / DSM 18823 / ISDg) (Clostridium phytofermentans).